The primary structure comprises 222 residues: Pleckstrin homology domain-containing family B member 2 (222 aa).

The PH domain occupies 2 to 109 (AFVKSGWLLR…WKFTLQDSRT (108 aa)). Lys20 is an a 1,2-diacyl-sn-glycero-3-phospho-L-serine binding site.

It is found in the recycling endosome membrane. Functionally, involved in retrograde transport of recycling endosomes. This is Pleckstrin homology domain-containing family B member 2 (PLEKHB2) from Homo sapiens (Human).